Consider the following 419-residue polypeptide: UDP-N-acetylglucosamine 1-carboxyvinyltransferase (419 aa).

Phosphoenolpyruvate is bound at residue 22-23 (KN). R91 contributes to the UDP-N-acetyl-alpha-D-glucosamine binding site. The Proton donor role is filled by C115. C115 is modified (2-(S-cysteinyl)pyruvic acid O-phosphothioketal). Residues 120–124 (RPVDL), 160–163 (KVSV), D305, and V327 contribute to the UDP-N-acetyl-alpha-D-glucosamine site.

This sequence belongs to the EPSP synthase family. MurA subfamily.

The protein localises to the cytoplasm. It carries out the reaction phosphoenolpyruvate + UDP-N-acetyl-alpha-D-glucosamine = UDP-N-acetyl-3-O-(1-carboxyvinyl)-alpha-D-glucosamine + phosphate. Its pathway is cell wall biogenesis; peptidoglycan biosynthesis. Cell wall formation. Adds enolpyruvyl to UDP-N-acetylglucosamine. This Escherichia coli O157:H7 protein is UDP-N-acetylglucosamine 1-carboxyvinyltransferase.